The sequence spans 480 residues: Endothelial transcription factor GATA-2 (480 aa).

The residue at position 73 (S73) is a Phosphoserine. Asymmetric dimethylarginine is present on R86. The tract at residues 119–209 (SPFSKTPLHP…GSAARGEDKD (91 aa)) is disordered. Residues 143–153 (GAGGGSGGGSG) are compositionally biased toward gly residues. A compositionally biased stretch (low complexity) spans 185–203 (PSTTGAASPASSSAGGSAA). A Phosphoserine modification is found at S192. GATA-type zinc fingers lie at residues 295-319 (CVNC…CNAC) and 349-373 (CANC…CNAC). A Glycyl lysine isopeptide (Lys-Gly) (interchain with G-Cter in SUMO2) cross-link involves residue K389. The disordered stretch occupies residues 448 to 480 (HSGHILPTPTPIHPSSSLSFGHPHPSSMVTAMG).

In terms of assembly, interacts with BRD3. Interacts with AR and CCAR1. Interacts with MDFIC. In terms of tissue distribution, endothelial cells.

The protein localises to the nucleus. Its function is as follows. Transcriptional activator which regulates endothelin-1 gene expression in endothelial cells. Binds to the consensus sequence 5'-AGATAG-3'. The chain is Endothelial transcription factor GATA-2 (GATA2) from Homo sapiens (Human).